A 286-amino-acid polypeptide reads, in one-letter code: Aminoglycoside N(3)-acetyltransferase III (286 aa).

Belongs to the antibiotic N-acetyltransferase family.

It catalyses the reaction a 2-deoxystreptamine antibiotic + acetyl-CoA = an N(3)-acetyl-2-deoxystreptamine antibiotic + CoA + H(+). In terms of biological role, resistance to antibiotics containing the 2-deoxy-streptamine ring including gentamicin, kanamycin, tobramycin, neomycin and apramycin. The polypeptide is Aminoglycoside N(3)-acetyltransferase III (aacC2) (Acinetobacter baumannii).